An 86-amino-acid polypeptide reads, in one-letter code: Cell division topological specificity factor (86 aa).

Belongs to the MinE family.

Prevents the cell division inhibition by proteins MinC and MinD at internal division sites while permitting inhibition at polar sites. This ensures cell division at the proper site by restricting the formation of a division septum at the midpoint of the long axis of the cell. The protein is Cell division topological specificity factor of Rhizobium etli (strain ATCC 51251 / DSM 11541 / JCM 21823 / NBRC 15573 / CFN 42).